The following is a 600-amino-acid chain: Proline--tRNA ligase (600 aa).

It belongs to the class-II aminoacyl-tRNA synthetase family. ProS type 1 subfamily. As to quaternary structure, homodimer.

It is found in the cytoplasm. The catalysed reaction is tRNA(Pro) + L-proline + ATP = L-prolyl-tRNA(Pro) + AMP + diphosphate. Functionally, catalyzes the attachment of proline to tRNA(Pro) in a two-step reaction: proline is first activated by ATP to form Pro-AMP and then transferred to the acceptor end of tRNA(Pro). As ProRS can inadvertently accommodate and process non-cognate amino acids such as alanine and cysteine, to avoid such errors it has two additional distinct editing activities against alanine. One activity is designated as 'pretransfer' editing and involves the tRNA(Pro)-independent hydrolysis of activated Ala-AMP. The other activity is designated 'posttransfer' editing and involves deacylation of mischarged Ala-tRNA(Pro). The misacylated Cys-tRNA(Pro) is not edited by ProRS. The polypeptide is Proline--tRNA ligase (Acaryochloris marina (strain MBIC 11017)).